Reading from the N-terminus, the 227-residue chain is UPF0758 protein Spro_4842 (227 aa).

Residues 105-227 (AMLNPRMTQH…CVSFAERGWL (123 aa)) form the MPN domain. Zn(2+) is bound by residues H176, H178, and D189. A JAMM motif motif is present at residues 176–189 (HNHPSGKAEPSHAD).

This sequence belongs to the UPF0758 family. YicR subfamily.

The protein is UPF0758 protein Spro_4842 of Serratia proteamaculans (strain 568).